A 246-amino-acid polypeptide reads, in one-letter code: MADS-box transcription factor 14 (246 aa).

Positions 1–61 (MGRGKVQLKR…GKLYKYATDS (61 aa)) constitute an MADS-box domain. The region spanning 88 to 178 (QGNWCHEYRK…QKELVEKQKV (91 aa)) is the K-box domain. The disordered stretch occupies residues 180 to 199 (KQQVQWDQTQPQTSSSSSSF).

Highly expressed in sterile lemmas, at intermediate levels in stamens, and weakly in lemmas, paleas and carpels.

The protein localises to the nucleus. Functionally, probable transcription factor. The sequence is that of MADS-box transcription factor 14 (MADS14) from Oryza sativa subsp. indica (Rice).